The sequence spans 273 residues: Formamidopyrimidine-DNA glycosylase (273 aa).

Pro-2 (schiff-base intermediate with DNA) is an active-site residue. Residue Glu-3 is the Proton donor of the active site. Lys-58 acts as the Proton donor; for beta-elimination activity in catalysis. The DNA site is built by His-91 and Arg-110. The FPG-type zinc finger occupies 238-272 (QVYGKTGQPCPRCASMIVKIKLGGRGTHLCPHCQK). The active-site Proton donor; for delta-elimination activity is Arg-262.

This sequence belongs to the FPG family. As to quaternary structure, monomer. The cofactor is Zn(2+).

The catalysed reaction is Hydrolysis of DNA containing ring-opened 7-methylguanine residues, releasing 2,6-diamino-4-hydroxy-5-(N-methyl)formamidopyrimidine.. It catalyses the reaction 2'-deoxyribonucleotide-(2'-deoxyribose 5'-phosphate)-2'-deoxyribonucleotide-DNA = a 3'-end 2'-deoxyribonucleotide-(2,3-dehydro-2,3-deoxyribose 5'-phosphate)-DNA + a 5'-end 5'-phospho-2'-deoxyribonucleoside-DNA + H(+). Involved in base excision repair of DNA damaged by oxidation or by mutagenic agents. Acts as a DNA glycosylase that recognizes and removes damaged bases. Has a preference for oxidized purines, such as 7,8-dihydro-8-oxoguanine (8-oxoG). Has AP (apurinic/apyrimidinic) lyase activity and introduces nicks in the DNA strand. Cleaves the DNA backbone by beta-delta elimination to generate a single-strand break at the site of the removed base with both 3'- and 5'-phosphates. The chain is Formamidopyrimidine-DNA glycosylase from Streptococcus thermophilus (strain ATCC BAA-250 / LMG 18311).